The sequence spans 217 residues: Protein-L-isoaspartate O-methyltransferase 2 (217 aa).

The active site involves S64.

Belongs to the methyltransferase superfamily. L-isoaspartyl/D-aspartyl protein methyltransferase family.

The protein localises to the cytoplasm. It catalyses the reaction [protein]-L-isoaspartate + S-adenosyl-L-methionine = [protein]-L-isoaspartate alpha-methyl ester + S-adenosyl-L-homocysteine. In terms of biological role, catalyzes the methyl esterification of L-isoaspartyl residues in peptides and proteins that result from spontaneous decomposition of normal L-aspartyl and L-asparaginyl residues. It plays a role in the repair and/or degradation of damaged proteins. This is Protein-L-isoaspartate O-methyltransferase 2 from Rhodopseudomonas palustris (strain HaA2).